Reading from the N-terminus, the 911-residue chain is DNA mismatch repair protein MutS (911 aa).

The span at 1-10 shows a compositional bias: basic and acidic residues; the sequence is MDNKTDHKND. Residues 1–24 are disordered; it reads MDNKTDHKNDLNSQPVPSSAPHKE. Residue 662–669 participates in ATP binding; sequence GPNMGGKS.

The protein belongs to the DNA mismatch repair MutS family.

Its function is as follows. This protein is involved in the repair of mismatches in DNA. It is possible that it carries out the mismatch recognition step. This protein has a weak ATPase activity. In Bartonella quintana (strain Toulouse) (Rochalimaea quintana), this protein is DNA mismatch repair protein MutS.